A 530-amino-acid chain; its full sequence is Cation transporter HKT2;1 (530 aa).

Topologically, residues 1 to 40 (MTSIYHDFIHNKLQSFGRIGRYFVNFVVLAHRFIALHIHP) are cytoplasmic. Transmembrane regions (helical) follow at residues 41-61 (FWIQ…LLMF) and 102-122 (IVVI…FLGL). Residues 123 to 186 (MLRLNHKHNP…DLKRSKRLRW (64 aa)) lie on the Cytoplasmic side of the membrane. 2 consecutive transmembrane segments (helical) span residues 187 to 207 (FLGF…FLLV) and 260 to 280 (GLLL…PLFL). The Cytoplasmic portion of the chain corresponds to 281–317 (RLLIWFLGKVTKLRELKLMIKNPEELQYDYLLPKLPT). 2 consecutive transmembrane segments (helical) span residues 318-338 (AFLA…FGAV) and 372-392 (IDCS…MYLP). The Cytoplasmic segment spans residues 393–418 (PSTTFALSNGDEKTANKKAKRKLGLV). 2 consecutive transmembrane segments (helical) span residues 419–439 (VQNL…VAFI) and 494–514 (SLSG…MLYG). Over 515–530 (RLKAFTKGTGEYWRLW) the chain is Cytoplasmic.

The protein belongs to the TrkH potassium transport family. HKT (TC 2.A.38.3) subfamily. As to expression, expressed in epidermis and vascular tissue of endodermis in roots, and in cells surrounding the vasculature in leaves.

It localises to the membrane. The catalysed reaction is Na(+)(in) = Na(+)(out). Functionally, seems to be involved in regulation of potassium-sodium homeostasis. Seems to act as a high-affinity sodium transporter, which mediates increased sodium uptake in roots under potassium deficiency and contributes to sodium accumulation and salt toxicity. Involved in nutritional sodium uptake and distribution in potassium-starved roots to allow plant growth. May also act as a potassium transporter. Functions as a sodium-potassium cotransporter. The polypeptide is Cation transporter HKT2;1 (Oryza sativa subsp. indica (Rice)).